We begin with the raw amino-acid sequence, 176 residues long: 2-oxo-4-hydroxy-4-carboxy-5-ureidoimidazoline decarboxylase (176 aa).

The Proton donor; for OHCU decarboxylase activity role is filled by histidine 70. Residues proline 71, 83-87, and 118-122 each bind substrate; these read SQEEQ and FIMAV. The interval 72 to 96 is disordered; the sequence is DLGERTEMTDESQEEQASAGLDRLP.

The protein belongs to the OHCU decarboxylase family.

It carries out the reaction 5-hydroxy-2-oxo-4-ureido-2,5-dihydro-1H-imidazole-5-carboxylate + H(+) = (S)-allantoin + CO2. It participates in purine metabolism; urate degradation; (S)-allantoin from urate: step 3/3. In terms of biological role, catalyzes the stereoselective decarboxylation of 2-oxo-4-hydroxy-4-carboxy-5-ureidoimidazoline (OHCU) to (S)-allantoin. The chain is 2-oxo-4-hydroxy-4-carboxy-5-ureidoimidazoline decarboxylase from Halalkalicoccus jeotgali (strain DSM 18796 / CECT 7217 / JCM 14584 / KCTC 4019 / B3).